The primary structure comprises 1021 residues: Ubiquitin-activating enzyme E1 1 (1021 aa).

Arg-22, Ala-442, and Asp-468 together coordinate ATP. A Mg(2+)-binding site is contributed by Asp-470. ATP-binding positions include Arg-479, Lys-492, Val-518, and 542–543; that span reads DN. Asp-542 contacts Mg(2+). Catalysis depends on Cys-598, which acts as the Glycyl thioester intermediate.

It belongs to the ubiquitin-activating E1 family. As to quaternary structure, monomer.

The protein resides in the cytoplasm. Its subcellular location is the nucleus. The enzyme catalyses ATP + ubiquitin + [E1 ubiquitin-activating enzyme]-L-cysteine = AMP + diphosphate + S-ubiquitinyl-[E1 ubiquitin-activating enzyme]-L-cysteine.. It functions in the pathway protein modification; protein ubiquitination. E1 ubiquitin-activating enzyme that catalyzes the first step in ubiquitin conjugation to mark cellular proteins for degradation through the ubiquitin-proteasome system. Activates ubiquitin by first adenylating its C-terminal glycine residue with ATP, and thereafter linking this residue to the side chain of a cysteine residue in E1, yielding a ubiquitin-E1 thioester and free AMP. This Candida albicans (strain WO-1) (Yeast) protein is Ubiquitin-activating enzyme E1 1 (UBA1).